Consider the following 473-residue polypeptide: tRNA-2-methylthio-N(6)-dimethylallyladenosine synthase (473 aa).

Residues 3-120 (MKLHVKTWGC…LPEMIKEVQE (118 aa)) form the MTTase N-terminal domain. [4Fe-4S] cluster-binding residues include Cys12, Cys49, Cys83, Cys157, Cys161, and Cys164. Residues 143-375 (KADGATAFVS…QDRIQQQSQG (233 aa)) form the Radical SAM core domain. The region spanning 378–441 (RKMVGSVQRI…TNSIRGKFIR (64 aa)) is the TRAM domain.

It belongs to the methylthiotransferase family. MiaB subfamily. In terms of assembly, monomer. The cofactor is [4Fe-4S] cluster.

It is found in the cytoplasm. The enzyme catalyses N(6)-dimethylallyladenosine(37) in tRNA + (sulfur carrier)-SH + AH2 + 2 S-adenosyl-L-methionine = 2-methylsulfanyl-N(6)-dimethylallyladenosine(37) in tRNA + (sulfur carrier)-H + 5'-deoxyadenosine + L-methionine + A + S-adenosyl-L-homocysteine + 2 H(+). Catalyzes the methylthiolation of N6-(dimethylallyl)adenosine (i(6)A), leading to the formation of 2-methylthio-N6-(dimethylallyl)adenosine (ms(2)i(6)A) at position 37 in tRNAs that read codons beginning with uridine. The chain is tRNA-2-methylthio-N(6)-dimethylallyladenosine synthase from Psychromonas ingrahamii (strain DSM 17664 / CCUG 51855 / 37).